Reading from the N-terminus, the 70-residue chain is uncharacterized protein (70 aa).

Residues phenylalanine 50–isoleucine 70 traverse the membrane as a helical segment.

This sequence belongs to the M.jannaschii MJ0023/MJ0349/MJ1072/MJ1074/MJ1107/MJECL16 family.

It localises to the membrane. This is an uncharacterized protein from Methanocaldococcus jannaschii (strain ATCC 43067 / DSM 2661 / JAL-1 / JCM 10045 / NBRC 100440) (Methanococcus jannaschii).